The chain runs to 316 residues: Probable tRNA-dihydrouridine synthase (316 aa).

Residues 12 to 14 (PMA) and glutamine 65 each bind FMN. The Proton donor role is filled by cysteine 96. Residues lysine 138, 197-199 (SGD), and 221-222 (GR) contribute to the FMN site.

This sequence belongs to the Dus family. FMN is required as a cofactor.

It catalyses the reaction a 5,6-dihydrouridine in tRNA + NAD(+) = a uridine in tRNA + NADH + H(+). It carries out the reaction a 5,6-dihydrouridine in tRNA + NADP(+) = a uridine in tRNA + NADPH + H(+). Catalyzes the synthesis of 5,6-dihydrouridine (D), a modified base found in the D-loop of most tRNAs, via the reduction of the C5-C6 double bond in target uridines. This chain is Probable tRNA-dihydrouridine synthase (dus), found in Aquifex aeolicus (strain VF5).